The following is a 156-amino-acid chain: ATP synthase subunit b (156 aa).

Residues 7–27 (LFVQAIVFLILVWFTMQFVWP) traverse the membrane as a helical segment.

This sequence belongs to the ATPase B chain family. In terms of assembly, F-type ATPases have 2 components, F(1) - the catalytic core - and F(0) - the membrane proton channel. F(1) has five subunits: alpha(3), beta(3), gamma(1), delta(1), epsilon(1). F(0) has three main subunits: a(1), b(2) and c(10-14). The alpha and beta chains form an alternating ring which encloses part of the gamma chain. F(1) is attached to F(0) by a central stalk formed by the gamma and epsilon chains, while a peripheral stalk is formed by the delta and b chains.

It localises to the cell inner membrane. Its function is as follows. F(1)F(0) ATP synthase produces ATP from ADP in the presence of a proton or sodium gradient. F-type ATPases consist of two structural domains, F(1) containing the extramembraneous catalytic core and F(0) containing the membrane proton channel, linked together by a central stalk and a peripheral stalk. During catalysis, ATP synthesis in the catalytic domain of F(1) is coupled via a rotary mechanism of the central stalk subunits to proton translocation. Functionally, component of the F(0) channel, it forms part of the peripheral stalk, linking F(1) to F(0). This Verminephrobacter eiseniae (strain EF01-2) protein is ATP synthase subunit b.